The chain runs to 1721 residues: Intersectin-1 (1721 aa).

Positions 21–109 (ERAKHDQQFH…PVMKQQPVAI (89 aa)) constitute an EH 1 domain. The region spanning 53 to 88 (LPQPVLAQIWALADMNNDGRMDQVEFSIAMKLIKLK) is the EF-hand 1 domain. Ca(2+)-binding residues include aspartate 66, asparagine 68, aspartate 70, arginine 72, and glutamate 77. At serine 203 the chain carries Phosphoserine. The 90-residue stretch at 221 to 310 (SRLKYRQLFN…PEYIPPSFRR (90 aa)) folds into the EH 2 domain. An EF-hand 2 domain is found at 254 to 289 (LPQAQLASIWNLSDIDQDGKLTAEEFILAMHLIDVA). Positions 267, 269, 271, 273, and 278 each coordinate Ca(2+). Serine 318 carries the phosphoserine modification. Disordered stretches follow at residues 322-348 (STSV…KLPV) and 650-701 (QRRA…KQEA). The KLERQ stretch occupies residues 326–702 (DQRLPEEPVL…GEEKGKQEAQ (377 aa)). The stretch at 355–659 (RENFERGNLE…QRRAQERDKQ (305 aa)) forms a coiled coil. Serine 687 carries the post-translational modification Phosphoserine. One can recognise an SH3 1 domain in the interval 740–806 (VKVVYYRALY…PANYAEKIPE (67 aa)). The segment at 836-868 (LAVTSSEPSTTPNNWADFSSTWPTSTNEKPETD) is disordered. Polar residues predominate over residues 838-862 (VTSSEPSTTPNNWADFSSTWPTSTN). Threonine 897 carries the phosphothreonine modification. Phosphoserine occurs at positions 901, 902, and 904. Residues 913 to 971 (VEGLQAQALYPWRAKKDNHLNFNKNDVITVLEQQDMWWFGEVQGQKGWFPKSYVKLISG) enclose the SH3 2 domain. Phosphoserine occurs at positions 978, 986, and 995. 2 consecutive SH3 domains span residues 1002–1060 (VSGE…LKDS) and 1074–1138 (KKPE…LLSP). Residues 1074 to 1138 (KKPEIAQVIA…PANYVKLLSP (65 aa)) are required for interaction with FCHSD2. A Bipartite nuclear localization signal; in isoform 2 motif is present at residues 1104 to 1127 (RKKNPGGWWEGELQARGKKRQIGW). Serine 1137 bears the Phosphoserine mark. Threonine 1144 is modified (phosphothreonine). The region spanning 1155–1214 (AAVCQVIGMYDYTAQNDDELAFNKGQIINVLNKEDPDWWKGEVNGQVGLFPSNYVKLTTD) is the SH3 5 domain. The 187-residue stretch at 1237 to 1423 (KRQGYIHELI…EELCSQVNEG (187 aa)) folds into the DH domain. The PH domain occupies 1462-1571 (KFLHSGKLYK…WVQKIKAASE (110 aa)). One can recognise a C2 domain in the interval 1579–1695 (KKREKAYLVR…KKDQGSKGPV (117 aa)). At serine 1645 the chain carries Phosphoserine. Residues aspartate 1667, serine 1670, and aspartate 1673 each coordinate Ca(2+).

In terms of assembly, interacts (via DH domain) with CDC42. Interacts (via SH3 domain 1) with WASL. Interacts with dynamin, SNAP25 and SNAP23. Interacts with clathrin-associated proteins and other components of the endocytic machinery, such as SPIN90, EPS15, EPN1, EPN2, STON2, FCHO1, FCHO2 and DAB2. Interacts (via SH3 domains) with REPS1 and SGIP1. Interacts with ARHGAP31. Interacts with ADAM15. Interacts with PRRT2. Interacts (via SH3 domain 4) with FCHSD2 (via SH3 domain 2). Interacts (via SH3 domain 1) with DENND2B. Interacts (via SH3 domains) with CBL. Isoform 2: Interacts with CBL and DNM1. Isoform 2: Interacts with LMNA. Isoform 2: Interacts with importin subunit KPNA1; this is likely to mediate its import into the nucleus. Interacts with DNM2. (Microbial infection) Interacts with vaccinia virus protein A36. It depends on Ca(2+) as a cofactor. In terms of tissue distribution, isoform 1 is expressed almost exclusively in the brain. Isoform 2 is detected in brain, spleen, lung, liver, heart, skeletal muscle and kidney. Isoform 5 is primarily expressed in brain, spleen, lung and kidney (at protein level). Isoform 1 and isoform 2 are detected in brain. Isoform 2 is ubiquitous in adult and fetal tissues with high expression in skeletal muscle, heart, spleen, ovary, testis and all fetal tissues tested and low expression in thymus, blood, lung, liver and pancreas. Isoform 1 is expressed almost exclusively in the brain, in all brain regions. Not expressed in the spinal cord.

Its subcellular location is the endomembrane system. It localises to the synapse. The protein resides in the synaptosome. The protein localises to the cell projection. It is found in the lamellipodium. Its subcellular location is the cell membrane. It localises to the membrane. The protein resides in the clathrin-coated pit. The protein localises to the recycling endosome. It is found in the endosome. Its subcellular location is the cytoplasmic vesicle. It localises to the cytoplasm. The protein resides in the nucleus envelope. Adapter protein that provides a link between the endocytic membrane traffic and the actin assembly machinery. Acts as a guanine nucleotide exchange factor (GEF) for CDC42, and thereby stimulates actin nucleation mediated by WASL and the ARP2/3 complex. Plays a role in the assembly and maturation of clathrin-coated vesicles. Recruits FCHSD2 to clathrin-coated pits. Involved in endocytosis of activated EGFR, and probably also other growth factor receptors. Involved in endocytosis of integrin beta-1 (ITGB1) and transferrin receptor (TFR); internalization of ITGB1 as DAB2-dependent cargo but not TFR may involve association with DAB2. Promotes ubiquitination and subsequent degradation of EGFR, and thereby contributes to the down-regulation of EGFR-dependent signaling pathways. In chromaffin cells, required for normal exocytosis of catecholamines. Required for rapid replenishment of release-ready synaptic vesicles at presynaptic active zones. Inhibits ARHGAP31 activity toward RAC1. Its function is as follows. Plays a role in synaptic vesicle endocytosis in brain neurons. In Homo sapiens (Human), this protein is Intersectin-1.